Reading from the N-terminus, the 444-residue chain is MQVKETQNEGLKRGYEFTLPAADLAAQVDAKLKEAQPEVEMKGFRKGKVPMALLKKQFGQRIMGDAMQEAIDKALRDHLEKSGDRPALQPKIEMVNGETWKEGDDVVVTVAYEALPAIPEADLSGVELERLVVEASEEQVTEALENLAKNAQSFEDRKKGTKAKDGDQIVIDFKGMVDGEAFEGGSAEDYPLVLGSKSFIPGFEEQLVGAKAGDEVKVEVKFPEDYGHPALAGKDAVFETTVKAVKAPKAAEIDDELAKKFGAESLDALKGQIRERLEAEYKGASRQVLKRTLLDRLDEMVKFDLPESLVEAEAHQIAHQLWHEEHPEEHGHNHGEIEPTDEHKKLAERRVRLGLLLAEIGQKAEITVSDQEMTQAVLRQARQFPGQERAFFEFIQQNPQAQQQLRAPIFEDKVVDHIVEGAKVSEKPVTKDELEKAIEALDQV.

The PPIase FKBP-type domain occupies glycine 166–alanine 251.

The protein belongs to the FKBP-type PPIase family. Tig subfamily.

The protein resides in the cytoplasm. It catalyses the reaction [protein]-peptidylproline (omega=180) = [protein]-peptidylproline (omega=0). Its function is as follows. Involved in protein export. Acts as a chaperone by maintaining the newly synthesized protein in an open conformation. Functions as a peptidyl-prolyl cis-trans isomerase. In Paracoccus denitrificans (strain Pd 1222), this protein is Trigger factor.